The primary structure comprises 388 residues: Chorismate synthase (388 aa).

Residues Arg39 and Arg45 each contribute to the NADP(+) site. FMN-binding positions include 132–134, 251–252, Gly296, 311–315, and Arg337; these read RSS, NA, and KPIPT.

This sequence belongs to the chorismate synthase family. As to quaternary structure, homotetramer. FMNH2 serves as cofactor.

It carries out the reaction 5-O-(1-carboxyvinyl)-3-phosphoshikimate = chorismate + phosphate. It participates in metabolic intermediate biosynthesis; chorismate biosynthesis; chorismate from D-erythrose 4-phosphate and phosphoenolpyruvate: step 7/7. Functionally, catalyzes the anti-1,4-elimination of the C-3 phosphate and the C-6 proR hydrogen from 5-enolpyruvylshikimate-3-phosphate (EPSP) to yield chorismate, which is the branch point compound that serves as the starting substrate for the three terminal pathways of aromatic amino acid biosynthesis. This reaction introduces a second double bond into the aromatic ring system. This chain is Chorismate synthase, found in Staphylococcus epidermidis (strain ATCC 35984 / DSM 28319 / BCRC 17069 / CCUG 31568 / BM 3577 / RP62A).